The following is a 137-amino-acid chain: Large ribosomal subunit protein uL16 (137 aa).

It belongs to the universal ribosomal protein uL16 family. In terms of assembly, part of the 50S ribosomal subunit.

Binds 23S rRNA and is also seen to make contacts with the A and possibly P site tRNAs. In Xanthomonas campestris pv. campestris (strain 8004), this protein is Large ribosomal subunit protein uL16.